The chain runs to 251 residues: 5-oxoprolinase subunit A (251 aa).

This sequence belongs to the LamB/PxpA family. In terms of assembly, forms a complex composed of PxpA, PxpB and PxpC.

The enzyme catalyses 5-oxo-L-proline + ATP + 2 H2O = L-glutamate + ADP + phosphate + H(+). In terms of biological role, catalyzes the cleavage of 5-oxoproline to form L-glutamate coupled to the hydrolysis of ATP to ADP and inorganic phosphate. This chain is 5-oxoprolinase subunit A, found in Vibrio campbellii (strain ATCC BAA-1116).